A 184-amino-acid chain; its full sequence is Leucine-rich repeat-containing protein 20 (184 aa).

LRR repeat units lie at residues G23–V44, Q51–T72, Q75–L96, H98–P120, A121–A141, and A145–L167. The residue at position 175 (S175) is a Phosphoserine.

This chain is Leucine-rich repeat-containing protein 20 (Lrrc20), found in Mus musculus (Mouse).